Here is a 154-residue protein sequence, read N- to C-terminus: Endoribonuclease YbeY (154 aa).

The Zn(2+) site is built by H114, H118, and H124.

It belongs to the endoribonuclease YbeY family. The cofactor is Zn(2+).

Its subcellular location is the cytoplasm. Functionally, single strand-specific metallo-endoribonuclease involved in late-stage 70S ribosome quality control and in maturation of the 3' terminus of the 16S rRNA. This is Endoribonuclease YbeY from Haemophilus influenzae (strain PittEE).